A 203-amino-acid chain; its full sequence is dITP/XTP pyrophosphatase (203 aa).

7–12 (SGNLHK) is a substrate binding site. 2 residues coordinate Mg(2+): E47 and D77. D77 (proton acceptor) is an active-site residue. Substrate-binding positions include S78, 160–163 (FGYD), K183, and 188–189 (HR).

The protein belongs to the HAM1 NTPase family. Homodimer. The cofactor is Mg(2+).

It carries out the reaction XTP + H2O = XMP + diphosphate + H(+). It catalyses the reaction dITP + H2O = dIMP + diphosphate + H(+). The catalysed reaction is ITP + H2O = IMP + diphosphate + H(+). Functionally, pyrophosphatase that catalyzes the hydrolysis of nucleoside triphosphates to their monophosphate derivatives, with a high preference for the non-canonical purine nucleotides XTP (xanthosine triphosphate), dITP (deoxyinosine triphosphate) and ITP. Seems to function as a house-cleaning enzyme that removes non-canonical purine nucleotides from the nucleotide pool, thus preventing their incorporation into DNA/RNA and avoiding chromosomal lesions. The sequence is that of dITP/XTP pyrophosphatase from Opitutus terrae (strain DSM 11246 / JCM 15787 / PB90-1).